The chain runs to 128 residues: Aspartate 1-decarboxylase (128 aa).

Ser-25 functions as the Schiff-base intermediate with substrate; via pyruvic acid in the catalytic mechanism. Ser-25 carries the post-translational modification Pyruvic acid (Ser). Position 57 (Thr-57) interacts with substrate. Catalysis depends on Tyr-58, which acts as the Proton donor. 73 to 75 is a binding site for substrate; sequence GAA.

Belongs to the PanD family. Heterooctamer of four alpha and four beta subunits. Pyruvate is required as a cofactor. Post-translationally, is synthesized initially as an inactive proenzyme, which is activated by self-cleavage at a specific serine bond to produce a beta-subunit with a hydroxyl group at its C-terminus and an alpha-subunit with a pyruvoyl group at its N-terminus.

Its subcellular location is the cytoplasm. It carries out the reaction L-aspartate + H(+) = beta-alanine + CO2. The protein operates within cofactor biosynthesis; (R)-pantothenate biosynthesis; beta-alanine from L-aspartate: step 1/1. Its function is as follows. Catalyzes the pyruvoyl-dependent decarboxylation of aspartate to produce beta-alanine. This chain is Aspartate 1-decarboxylase, found in Chlorobium limicola (strain DSM 245 / NBRC 103803 / 6330).